The primary structure comprises 440 residues: MSPDKPFRIMGDVGELHILPPKYAYEVRNNEKLSFTMAAFKWFYAHLPGFEGFREGTNESHIMKLVARHQLTHQLTLVTGAVSEECALVLKDVYTDSPEWHDITAKDANMKLMARITSRVFLGKEMCRNPQWLRITSTYAVIAFRAVEELRLWPSWLRPVVQWFMPHCTQSRALVQEARDLINPLLERRREEKAEAERTGEKVTYNDAVEWLDDLAREKGVGYDPACAQLSLSVAALHSTTDFFTQVMFDIAQNPELIEPLREEIIAVLGKQGWSKNSLYNLKLMDSVLKESQRLKPIAIASMRRFTTHNVKLSDGVILPKNKLTLVSAHQHWDPEYYKDPLKFDGYRFFNMRREPGKESKAQLVSATPDHMGFGYGLHACPGRFFASEEIKIALSHILLKYDFKPVEGSSMEPRKYGLNMNANPTAKLSVRRRKEEIAI.

Cysteine 381 contacts heme.

It belongs to the cytochrome P450 family. Heme is required as a cofactor.

Its pathway is plant hormone biosynthesis; gibberellin biosynthesis. Functionally, GA14 synthase; part of the gene cluster that mediates the biosynthesis of gibberellins (GAs), diterpenoids that may provide a selective advantage during infection of the preferred host plant, rice. Gibberellins (GAs) are diterpenoids and are synthesized via the mevalonate pathway. Biosynthesis of the major metabolite GA3 (gibberellic acid) from geranylgeranyl diphosphate (GGPP) requires 13 steps. The GGPP produced by the geranylgeranyl diphosphate synthase GGS2 is converted to ent-kaurene via ent-copalyldiphosphate in a two-step cyclization reaction performed by the bifunctional ent-copalyl diphosphate synthase/ent-kaurene synthase enzyme (CPS/KS). Ent-Kaurene is metabolized to GAs by a series of oxidation reactions catalyzed by cytochrome P450 monooxygenases. Cytochrome P450 monooxygenase P450-4 is an ent-kaurene oxidase that catalyzes the three oxidation steps between ent-kaurene and ent-kaurenoic acid. The highly multifunctional cytochrome P450 monooxygenase P450-1 then catalyzes four steps involving oxidation at two carbon atoms, in the main pathway from ent-kaurenoic acid to GA14 via GA12-aldehyde as well as producing kaurenolides and fujenoic acids as by-products. The cytochrome P450 monooxygenase P450-2 then converts GA14 to GA4 by removal of C-20. GA4 is further converted to GA7 by the GA4 desaturase DES via 1,2-desaturation before cytochrome P450 monooxygenase P450-3, a 13-hydroxylase, hydroxylates GA7 to GA3, the final product of the GA-biosynthetic pathway. This is Cytochrome P450 monooygenase 1 from Gibberella fujikuroi (strain CBS 195.34 / IMI 58289 / NRRL A-6831) (Bakanae and foot rot disease fungus).